Here is a 615-residue protein sequence, read N- to C-terminus: MPSPASNTWINTTLPSSCSSPFKDLASTSSSPTTLLPFKKRSSSNTNTITCSLQTLHYPKQYQPTSTSTTTTPTPIKPTTTTTTTTPHRETKPLSDTKQPFPQKWNFLQKAAATGLDMVETALVSHESKHPLPKTADPKVQIAGNFAPVPEHAADQALPVVGKIPKCIDGVYVRNGANPLYEPVAGHHFFDGDGMVHAVKFTNGAASYACRFTETQRLAQEKSLGRPVFPKAIGELHGHSGIARLLLFYARSLFQLVDGSHGMGVANAGLVYFNNHLLAMSEDDLPYHVRITSNGDLTTVGRYDFNGQLNSTMIAHPKLDPVNGDLHALSYDVVQKPYLKYFRFSADGVKSPDVEIPLKEPTMMHDFAITENFVVVPDQQVVFKLTEMITGGSPVVYDKNKTSRFGILDKNAKDANAMRWIDAPECFCFHLWNAWEEPETDEIVVIGSCMTPADSIFNECDESLKSVLSEIRLNLRTGKSTRRPIISDAEQVNLEAGMVNRNKLGRKTQFAYLALAEPWPKVSGFAKVDLFSGEVQKYMYGEEKFGGEPLFLPNGEEEGDGYILAFVHDEKEWKSELQIVNAQNLKLEASIKLPSRVPYGFHGTFIHSKDLRKQA.

The N-terminal 41 residues, 1–41, are a transit peptide targeting the chloroplast; that stretch reads MPSPASNTWINTTLPSSCSSPFKDLASTSSSPTTLLPFKKR. Disordered regions lie at residues 20–45 and 62–101; these read SPFKDLASTSSSPTTLLPFKKRSSSN and YQPTSTSTTTTPTPIKPTTTTTTTTPHRETKPLSDTKQPF. Low complexity-rich tracts occupy residues 27–37 and 64–86; these read STSSSPTTLLP and PTSTSTTTTPTPIKPTTTTTTTT. Fe cation is bound by residues H316, H365, and H430. The stretch at 571–592 forms a coiled coil; it reads KEWKSELQIVNAQNLKLEASIK. Residue H602 coordinates Fe cation.

It belongs to the carotenoid oxygenase family. Fe(2+) is required as a cofactor.

It is found in the plastid. Its subcellular location is the chloroplast thylakoid membrane. It carries out the reaction a 9-cis-epoxycarotenoid + O2 = a 12'-apo-carotenal + 2-cis,4-trans-xanthoxin. The catalysed reaction is 9-cis-violaxanthin + O2 = (3S,5R,6S)-5,6-epoxy-3-hydroxy-5,6-dihydro-12'-apo-beta-caroten-12'-al + 2-cis,4-trans-xanthoxin. The enzyme catalyses 9'-cis-neoxanthin + O2 = (3S,5R,6R)-3,5-dihydroxy-6,7-didehydro-5,6-dihydro-12'-apo-beta-caroten-12'-al + 2-cis,4-trans-xanthoxin. Has a 11,12(11',12') 9-cis epoxycarotenoid cleavage activity. Catalyzes the first step of abscisic-acid biosynthesis from carotenoids, in response to water stress. Active on 9-cis-violaxanthin and 9'-cis-neoxanthin, but not on the all-trans isomers of violaxanthin and neoxanthin. This Phaseolus vulgaris (Kidney bean) protein is 9-cis-epoxycarotenoid dioxygenase NCED1, chloroplastic (NCED1).